We begin with the raw amino-acid sequence, 551 residues long: Oleuropein beta-glucosidase (551 aa).

Positions 1–27 are enriched in polar residues; that stretch reads MDIQSNVLTITSGSTPTDTSSNGQAAK. Residues 1-33 are disordered; it reads MDIQSNVLTITSGSTPTDTSSNGQAAKSTKERI. A beta-D-glucoside is bound by residues Q52, H156, 201–202, Y363, E433, W482, 489–490, and F498; these read NE and EW. E202 serves as the catalytic Proton donor. E433 serves as the catalytic Nucleophile. The tract at residues 502-551 is required for the homomultimerization; the sequence is YVDYANGRYTRLPKRSAVWWRNFLTKPTAVPLKNEPEKSEDRRKRLRGST. The segment at 532-551 is disordered; sequence PLKNEPEKSEDRRKRLRGST. The segment covering 535–544 has biased composition (basic and acidic residues); that stretch reads NEPEKSEDRR. A Nuclear localization signal motif is present at residues 542-550; it reads DRRKRLRGS.

The protein belongs to the glycosyl hydrolase 1 family. As to quaternary structure, homomultimer. Native form of the enzyme requires at least an octamer conformation. As to expression, expressed in expanding leaves and in young drupes, mostly in the developing seed coat tissues, the perisperm and the mesocarp. Also detected in shoot and root meristems, flower buds, developing ovaries and tapetal cells of the anther. Not detected in embryos or endosperm, or in leaf trichomes.

It localises to the nucleus. It carries out the reaction oleuropein + H2O = oleuropein aglycone + D-glucose. Its function is as follows. Major beta-glucosidase activating oleuropein into a potent protein cross-linking agent. No activity with rutin, luteolin or p-nitrophenyl-beta-glucopyranoside as substrates. This chain is Oleuropein beta-glucosidase, found in Olea europaea (Common olive).